The following is a 230-amino-acid chain: Cytochrome c oxidase subunit 2 (230 aa).

The Mitochondrial intermembrane segment spans residues 1–14 (MAHPSQLGFQDAAS). A helical membrane pass occupies residues 15–45 (PVMEELLHFHDHALMIVFLISTLVLYIIAAT). Residues 46–59 (ASTKLTDKYILDSQ) lie on the Mitochondrial matrix side of the membrane. A helical membrane pass occupies residues 60–87 (EIEVIWTIMPAVILILIALPSLRILYLM). The Mitochondrial intermembrane segment spans residues 88-230 (DEINDPHLTV…NWSSLMLEDA (143 aa)). Cu cation is bound by residues H161, C196, E198, C200, H204, and M207. A Mg(2+)-binding site is contributed by E198.

The protein belongs to the cytochrome c oxidase subunit 2 family. In terms of assembly, component of the cytochrome c oxidase (complex IV, CIV), a multisubunit enzyme composed of 14 subunits. The complex is composed of a catalytic core of 3 subunits MT-CO1, MT-CO2 and MT-CO3, encoded in the mitochondrial DNA, and 11 supernumerary subunits COX4I, COX5A, COX5B, COX6A, COX6B, COX6C, COX7A, COX7B, COX7C, COX8 and NDUFA4, which are encoded in the nuclear genome. The complex exists as a monomer or a dimer and forms supercomplexes (SCs) in the inner mitochondrial membrane with NADH-ubiquinone oxidoreductase (complex I, CI) and ubiquinol-cytochrome c oxidoreductase (cytochrome b-c1 complex, complex III, CIII), resulting in different assemblies (supercomplex SCI(1)III(2)IV(1) and megacomplex MCI(2)III(2)IV(2)). Found in a complex with TMEM177, COA6, COX18, COX20, SCO1 and SCO2. Interacts with TMEM177 in a COX20-dependent manner. Interacts with COX20. Interacts with COX16. It depends on Cu cation as a cofactor.

It localises to the mitochondrion inner membrane. The enzyme catalyses 4 Fe(II)-[cytochrome c] + O2 + 8 H(+)(in) = 4 Fe(III)-[cytochrome c] + 2 H2O + 4 H(+)(out). Its function is as follows. Component of the cytochrome c oxidase, the last enzyme in the mitochondrial electron transport chain which drives oxidative phosphorylation. The respiratory chain contains 3 multisubunit complexes succinate dehydrogenase (complex II, CII), ubiquinol-cytochrome c oxidoreductase (cytochrome b-c1 complex, complex III, CIII) and cytochrome c oxidase (complex IV, CIV), that cooperate to transfer electrons derived from NADH and succinate to molecular oxygen, creating an electrochemical gradient over the inner membrane that drives transmembrane transport and the ATP synthase. Cytochrome c oxidase is the component of the respiratory chain that catalyzes the reduction of oxygen to water. Electrons originating from reduced cytochrome c in the intermembrane space (IMS) are transferred via the dinuclear copper A center (CU(A)) of subunit 2 and heme A of subunit 1 to the active site in subunit 1, a binuclear center (BNC) formed by heme A3 and copper B (CU(B)). The BNC reduces molecular oxygen to 2 water molecules using 4 electrons from cytochrome c in the IMS and 4 protons from the mitochondrial matrix. In Tetraodon nigroviridis (Spotted green pufferfish), this protein is Cytochrome c oxidase subunit 2 (mt-co2).